We begin with the raw amino-acid sequence, 449 residues long: Neuraminidase (449 aa).

Topologically, residues 1–6 (MNPNQK) are intravirion. Residues 7–29 (IITIGSVSLTIATVCFLMQIAIL) form a helical membrane-spanning segment. The involved in apical transport and lipid raft association stretch occupies residues 11 to 33 (GSVSLTIATVCFLMQIAILATNV). At 30–449 (ATNVTLHFRQ…DGANINFMPL (420 aa)) the chain is on the virion surface side. Asparagine 32, asparagine 48, and asparagine 66 each carry an N-linked (GlcNAc...) asparagine; by host glycan. The hypervariable stalk region stretch occupies residues 36–68 (HFRQNERSIPAYNQTTPCKPIIIERNIKYRNWS). Positions 71-449 (QCQITGFAPF…DGANINFMPL (379 aa)) are head of neuraminidase. 8 cysteine pairs are disulfide-bonded: cysteine 72–cysteine 397, cysteine 104–cysteine 109, cysteine 163–cysteine 210, cysteine 212–cysteine 217, cysteine 258–cysteine 271, cysteine 260–cysteine 269, cysteine 298–cysteine 317, and cysteine 401–cysteine 427. Arginine 98 lines the substrate pocket. N-linked (GlcNAc...) asparagine; by host glycosylation is found at asparagine 123 and asparagine 126. The active-site Proton donor/acceptor is the aspartate 131. Arginine 132 provides a ligand contact to substrate. N-linked (GlcNAc...) asparagine; by host glycosylation is found at asparagine 180 and asparagine 214. Substrate is bound at residue 256-257 (EE). Arginine 272 is a binding site for substrate. Aspartate 273, glycine 277, and aspartate 304 together coordinate Ca(2+). The interval 305 to 330 (TPRNDDSSSSSNCRDPNNERGNPGVK) is disordered. Residue arginine 351 coordinates substrate. Asparagine 382 is a glycosylation site (N-linked (GlcNAc...) asparagine; by host). Tyrosine 386 (nucleophile) is an active-site residue.

This sequence belongs to the glycosyl hydrolase 34 family. As to quaternary structure, homotetramer. Ca(2+) serves as cofactor. N-glycosylated.

It localises to the virion membrane. The protein resides in the host apical cell membrane. It carries out the reaction Hydrolysis of alpha-(2-&gt;3)-, alpha-(2-&gt;6)-, alpha-(2-&gt;8)- glycosidic linkages of terminal sialic acid residues in oligosaccharides, glycoproteins, glycolipids, colominic acid and synthetic substrates.. Its activity is regulated as follows. Inhibited by the neuraminidase inhibitors zanamivir (Relenza) and oseltamivir (Tamiflu). These drugs interfere with the release of progeny virus from infected cells and are effective against all influenza strains. Resistance to neuraminidase inhibitors is quite rare. Its function is as follows. Catalyzes the removal of terminal sialic acid residues from viral and cellular glycoconjugates. Cleaves off the terminal sialic acids on the glycosylated HA during virus budding to facilitate virus release. Additionally helps virus spread through the circulation by further removing sialic acids from the cell surface. These cleavages prevent self-aggregation and ensure the efficient spread of the progeny virus from cell to cell. Otherwise, infection would be limited to one round of replication. Described as a receptor-destroying enzyme because it cleaves a terminal sialic acid from the cellular receptors. May facilitate viral invasion of the upper airways by cleaving the sialic acid moieties on the mucin of the airway epithelial cells. Likely to plays a role in the budding process through its association with lipid rafts during intracellular transport. May additionally display a raft-association independent effect on budding. Plays a role in the determination of host range restriction on replication and virulence. Sialidase activity in late endosome/lysosome traffic seems to enhance virus replication. This Aves protein is Neuraminidase.